The sequence spans 156 residues: Guanine deaminase (156 aa).

Residues 1–132 (MNHETFLKRA…KPAEERTIPF (132 aa)) form the CMP/dCMP-type deaminase domain. His-53 provides a ligand contact to Zn(2+). The active-site Proton donor is Glu-55. Residues Cys-83 and Cys-86 each coordinate Zn(2+).

The protein belongs to the cytidine and deoxycytidylate deaminase family. Zn(2+) is required as a cofactor.

The catalysed reaction is guanine + H2O + H(+) = xanthine + NH4(+). Its pathway is purine metabolism; guanine degradation; xanthine from guanine: step 1/1. Functionally, catalyzes the hydrolytic deamination of guanine, producing xanthine and ammonia. The polypeptide is Guanine deaminase (guaD) (Bacillus subtilis (strain 168)).